A 220-amino-acid chain; its full sequence is Deoxyribose-phosphate aldolase (220 aa).

D89 (proton donor/acceptor) is an active-site residue. The active-site Schiff-base intermediate with acetaldehyde is K151. K180 (proton donor/acceptor) is an active-site residue.

The protein belongs to the DeoC/FbaB aldolase family. DeoC type 1 subfamily.

Its subcellular location is the cytoplasm. The enzyme catalyses 2-deoxy-D-ribose 5-phosphate = D-glyceraldehyde 3-phosphate + acetaldehyde. Its pathway is carbohydrate degradation; 2-deoxy-D-ribose 1-phosphate degradation; D-glyceraldehyde 3-phosphate and acetaldehyde from 2-deoxy-alpha-D-ribose 1-phosphate: step 2/2. In terms of biological role, catalyzes a reversible aldol reaction between acetaldehyde and D-glyceraldehyde 3-phosphate to generate 2-deoxy-D-ribose 5-phosphate. The protein is Deoxyribose-phosphate aldolase of Streptococcus suis (strain 05ZYH33).